The primary structure comprises 89 residues: Small ribosomal subunit protein uS19 (89 aa).

This sequence belongs to the universal ribosomal protein uS19 family.

Its function is as follows. Protein S19 forms a complex with S13 that binds strongly to the 16S ribosomal RNA. This chain is Small ribosomal subunit protein uS19, found in Xylella fastidiosa (strain 9a5c).